The chain runs to 216 residues: GTP cyclohydrolase 1 (216 aa).

Positions 108, 111, and 179 each coordinate Zn(2+).

It belongs to the GTP cyclohydrolase I family. In terms of assembly, toroid-shaped homodecamer, composed of two pentamers of five dimers.

It carries out the reaction GTP + H2O = 7,8-dihydroneopterin 3'-triphosphate + formate + H(+). It functions in the pathway cofactor biosynthesis; 7,8-dihydroneopterin triphosphate biosynthesis; 7,8-dihydroneopterin triphosphate from GTP: step 1/1. The chain is GTP cyclohydrolase 1 from Shewanella sp. (strain ANA-3).